Consider the following 532-residue polypeptide: Cytochrome P450 monooxygenase criE (532 aa).

A helical transmembrane segment spans residues 18–38; that stretch reads VSPAALSWAVVAVYIGTFFWL. Cys441 provides a ligand contact to heme.

It belongs to the cytochrome P450 family. Requires heme as cofactor.

It localises to the membrane. The catalysed reaction is preechinulin + reduced [NADPH--hemoprotein reductase] + O2 = neoechinulin A + oxidized [NADPH--hemoprotein reductase] + 2 H2O + H(+). It functions in the pathway secondary metabolite biosynthesis. It participates in alkaloid biosynthesis. Cytochrome P450 monooxygenase; part of the gene cluster that mediates the biosynthesis of echinulin family alkaloid. The pathway begins with the biosynthesis of the cyclic dipeptide cyclo-L-Trp-L-Ala (cyclo-TA) by the NRPS criC via condensation of L-alanine and L-tryptophan. The prenyltransferase criA then catalyzes the first prenylation step, a reverse prenylation reaction at C2, to yield preechinulin. Preechinulin is the substrate of the cytochrome P450 monooxygenase criE that catalyzes the formation of the double bond between C10 and C11 to produce neoechulin A. The unique prenyltransferase criF functions as a competitive enzyme with criE for preechinulin metabolization and uses preechinulin for effective regiospecific prenylations. Preechinulin is prenylated by criF at C5 or C7. C7-prenylation leads to accumulation of tardioxopiperazine B without further modification by criF. In contrast, the C5-prenylated tardioxopiperazine A can be prenylated again by criF, predominantly at C7 to form echinulin or less frequently at C4 to give variecolorin L. CriF also accepts neoechilunin A to produce varlecolorin G (prenylation at C5) or isoechinulin A (prenylation at C7). CriF further converts isoechinulin A into dehydroechinulin. Moreover, a yet unidentified enzyme can also convert neoechilunin A into neoechilunin B by introducing a double bond between positions C14 and C17 and thus provides a further substrate to criF for C5 and C7 prenylation. This is Cytochrome P450 monooxygenase criE from Aspergillus cristatus (Chinese Fuzhuan brick tea-fermentation fungus).